Reading from the N-terminus, the 333-residue chain is Protein SEEDLING LETHAL 1, chloroplastic (333 aa).

Residues 1-55 (MQQEALSFLSSSLPSLHHNFPSLSRLRFNNFPALSFKPNTSSSSSSFFKSPDIPS) constitute a chloroplast transit peptide. The disordered stretch occupies residues 38 to 67 (PNTSSSSSSFFKSPDIPSLSSTTTTTTTTE).

The protein belongs to the mTERF family. Self-interacts. Associates with the plastid-encoded RNA polymerase (PEP) complex. Interacts directly with PTAC7/PAP12, PTAC12/HMR/PAP5 and PTAC14/PAP7. In terms of tissue distribution, expressed in green aerial tissues such as cotyledons, leaves, flowers and siliques, but not in roots.

The protein resides in the plastid. Its subcellular location is the chloroplast stroma. The protein localises to the chloroplast nucleoid. Transcription termination factor required for chloroplast gene expression and protein synthesis in chloroplasts. Necessary for chloroplast photosynthetic complexes assembly by modulating the accumulation of photosynthetic proteins. Essential for embryogenesis. This chain is Protein SEEDLING LETHAL 1, chloroplastic, found in Arabidopsis thaliana (Mouse-ear cress).